The sequence spans 453 residues: Probable glycine dehydrogenase (decarboxylating) subunit 1 (453 aa).

Belongs to the GcvP family. N-terminal subunit subfamily. As to quaternary structure, the glycine cleavage system is composed of four proteins: P, T, L and H. In this organism, the P 'protein' is a heterodimer of two subunits.

It carries out the reaction N(6)-[(R)-lipoyl]-L-lysyl-[glycine-cleavage complex H protein] + glycine + H(+) = N(6)-[(R)-S(8)-aminomethyldihydrolipoyl]-L-lysyl-[glycine-cleavage complex H protein] + CO2. The glycine cleavage system catalyzes the degradation of glycine. The P protein binds the alpha-amino group of glycine through its pyridoxal phosphate cofactor; CO(2) is released and the remaining methylamine moiety is then transferred to the lipoamide cofactor of the H protein. The polypeptide is Probable glycine dehydrogenase (decarboxylating) subunit 1 (Caulobacter sp. (strain K31)).